Consider the following 37-residue polypeptide: Cellular retinoic acid-binding protein 2 (37 aa).

The Nuclear localization signal signature appears at 21-31 (KALGVNMMLRK).

Belongs to the calycin superfamily. Fatty-acid binding protein (FABP) family. In terms of tissue distribution, embryo.

Its subcellular location is the cytoplasm. The protein resides in the endoplasmic reticulum. It localises to the nucleus. Transports retinoic acid to the nucleus. Regulates the access of retinoic acid to the nuclear retinoic acid receptors. This chain is Cellular retinoic acid-binding protein 2 (CRABP2), found in Gallus gallus (Chicken).